A 99-amino-acid chain; its full sequence is L-rhamnose mutarotase (99 aa).

Residue Y18 participates in substrate binding. The active-site Proton donor is the H22. Residues Y41 and 76–77 (WW) each bind substrate.

It belongs to the rhamnose mutarotase family. As to quaternary structure, homodimer.

It localises to the cytoplasm. It catalyses the reaction alpha-L-rhamnose = beta-L-rhamnose. It participates in carbohydrate metabolism; L-rhamnose metabolism. Functionally, involved in the anomeric conversion of L-rhamnose. In Shigella boydii serotype 18 (strain CDC 3083-94 / BS512), this protein is L-rhamnose mutarotase.